The primary structure comprises 555 residues: MPIAGTKYAPFPAPQLDDRTWPSKRIEKAPIWCSVDLRDGNQALIDPMGHDRKERMFRLLIDMGFPEIEIGFPSASQTDFDFCRWAIEQGDVPDDVDLQVLVQCRPELITRTFEALEGAKTPIIHFYNSTSELQRRVVFAKDVGGIKQIATDAAKMIMDMAAKAGGGYRFQYSPESFTGTELDVALEICNAVIEIVKPTPDNKLIVNLPSTVEMNTPNVYADQIEWMCRNLDNRESLIISLHPHNDRGTGIAATELGLMAGADRGEGTLFGNGERTGNVDVVTLALNMYTQGIDPGLDCTDINRMKEVYEYSNQLKIAERHPYVGELVYTAFSGSHQDAINKGMKARRSANSPVWEVPYLPIDPQDVGRSYEAIIRINSQSGKGGIAYILQADYGLNLPRNLQVEFREIIQHITDEEGKELPSKRIYEEFQKLYVTQPDARIKFVDHHTYPHPEQKGRRILTAEITDNGVTKTIEGKGTGPIDGFVDALSKYLGVKMSVVDYSEHSLQQGSDASAISYVEMVYPGGKLFGVGINDNIVSASLEAVVSAANRVIAK.

The 274-residue stretch at 30 to 303 folds into the Pyruvate carboxyltransferase domain; that stretch reads PIWCSVDLRD…DPGLDCTDIN (274 aa). D39, H242, H244, and N278 together coordinate Mg(2+). A regulatory domain region spans residues 437–555; the sequence is QPDARIKFVD…VSAANRVIAK (119 aa).

This sequence belongs to the alpha-IPM synthase/homocitrate synthase family. LeuA type 2 subfamily. In terms of assembly, homodimer. Mg(2+) serves as cofactor.

It localises to the cytoplasm. It catalyses the reaction 3-methyl-2-oxobutanoate + acetyl-CoA + H2O = (2S)-2-isopropylmalate + CoA + H(+). It functions in the pathway amino-acid biosynthesis; L-leucine biosynthesis; L-leucine from 3-methyl-2-oxobutanoate: step 1/4. Functionally, catalyzes the condensation of the acetyl group of acetyl-CoA with 3-methyl-2-oxobutanoate (2-ketoisovalerate) to form 3-carboxy-3-hydroxy-4-methylpentanoate (2-isopropylmalate). This is 2-isopropylmalate synthase from Brucella melitensis biotype 1 (strain ATCC 23456 / CCUG 17765 / NCTC 10094 / 16M).